The sequence spans 633 residues: DEAD-box ATP-dependent RNA helicase 37 (633 aa).

The segment at 1–110 (MSASWADVAD…WNNRSGGWDR (110 aa)) is disordered. The residue at position 2 (S2) is an N-acetylserine. A compositionally biased stretch (polar residues) spans 11–25 (SENTGSGSSNQNSHP). 2 stretches are compositionally biased toward gly residues: residues 68–80 (GGSG…GGGY) and 87–101 (PGSG…GGGW). A Q motif motif is present at residues 159–187 (NTFAEIDLGEALNLNIRRCKYVKPTPVQR). The region spanning 190-374 (IPILLEGRDL…ADFLANYIFL (185 aa)) is the Helicase ATP-binding domain. Position 203-210 (203-210 (AQTGSGKT)) interacts with ATP. Positions 318-321 (DEAD) match the DEAD box motif. The 152-residue stretch at 401–552 (HLMDLLHAQR…EVPEWLTRYA (152 aa)) folds into the Helicase C-terminal domain. Residues 555 to 600 (SSFGGGKNRRSGGRFGGRDFRREGSFGSGRGGYGGGGGGYGGGGGY) form a disordered region. Residues 580 to 600 (FGSGRGGYGGGGGGYGGGGGY) show a composition bias toward gly residues.

It belongs to the DEAD box helicase family. DDX3/DED1 subfamily.

The enzyme catalyses ATP + H2O = ADP + phosphate + H(+). This Arabidopsis thaliana (Mouse-ear cress) protein is DEAD-box ATP-dependent RNA helicase 37 (RH37).